Reading from the N-terminus, the 368-residue chain is tRNA-specific 2-thiouridylase MnmA (368 aa).

Residues 11 to 18 (GMSGGVDS) and methionine 37 each bind ATP. An interaction with target base in tRNA region spans residues 97–99 (NPD). Cysteine 102 acts as the Nucleophile in catalysis. Residues cysteine 102 and cysteine 199 are joined by a disulfide bond. An ATP-binding site is contributed by glycine 127. The segment at 149 to 151 (KDQ) is interaction with tRNA. The active-site Cysteine persulfide intermediate is the cysteine 199. Positions 311-312 (RY) are interaction with tRNA.

This sequence belongs to the MnmA/TRMU family. In terms of assembly, interacts with TusE.

Its subcellular location is the cytoplasm. It catalyses the reaction S-sulfanyl-L-cysteinyl-[protein] + uridine(34) in tRNA + AH2 + ATP = 2-thiouridine(34) in tRNA + L-cysteinyl-[protein] + A + AMP + diphosphate + H(+). Functionally, catalyzes the 2-thiolation of uridine at the wobble position (U34) of tRNA(Lys), tRNA(Glu) and tRNA(Gln), leading to the formation of s(2)U34, the first step of tRNA-mnm(5)s(2)U34 synthesis. Sulfur is provided by IscS, via a sulfur-relay system. Binds ATP and its substrate tRNAs. This Klebsiella pneumoniae (strain 342) protein is tRNA-specific 2-thiouridylase MnmA.